Reading from the N-terminus, the 365-residue chain is DNA polymerase IV (365 aa).

The region spanning 14-198 (IIHIDMDAFF…LPIEKFHGVG (185 aa)) is the UmuC domain. Positions 18 and 116 each coordinate Mg(2+). Glutamate 117 is an active-site residue.

Belongs to the DNA polymerase type-Y family. Monomer. The cofactor is Mg(2+).

It localises to the cytoplasm. The catalysed reaction is DNA(n) + a 2'-deoxyribonucleoside 5'-triphosphate = DNA(n+1) + diphosphate. Poorly processive, error-prone DNA polymerase involved in untargeted mutagenesis. Copies undamaged DNA at stalled replication forks, which arise in vivo from mismatched or misaligned primer ends. These misaligned primers can be extended by PolIV. Exhibits no 3'-5' exonuclease (proofreading) activity. May be involved in translesional synthesis, in conjunction with the beta clamp from PolIII. In Streptococcus pyogenes serotype M3 (strain ATCC BAA-595 / MGAS315), this protein is DNA polymerase IV.